The chain runs to 314 residues: Tetraacyldisaccharide 4'-kinase (314 aa).

ATP is bound at residue 54 to 61 (YIGGTGKT).

Belongs to the LpxK family.

The catalysed reaction is a lipid A disaccharide + ATP = a lipid IVA + ADP + H(+). The protein operates within glycolipid biosynthesis; lipid IV(A) biosynthesis; lipid IV(A) from (3R)-3-hydroxytetradecanoyl-[acyl-carrier-protein] and UDP-N-acetyl-alpha-D-glucosamine: step 6/6. Its function is as follows. Transfers the gamma-phosphate of ATP to the 4'-position of a tetraacyldisaccharide 1-phosphate intermediate (termed DS-1-P) to form tetraacyldisaccharide 1,4'-bis-phosphate (lipid IVA). The chain is Tetraacyldisaccharide 4'-kinase from Pelagibacter ubique (strain HTCC1062).